The chain runs to 115 residues: Toxin-like structure LSTX-R1 (115 aa).

The N-terminal stretch at 1–18 (MKLSLIIIATSLVIAVVA) is a signal peptide. Positions 19-51 (FPSKDSAATDFDKTESLENVEERVETALDERPR) are excised as a propeptide.

This sequence belongs to the neurotoxin 25 family. F7 subfamily. In terms of processing, contains 4 disulfide bonds. As to expression, expressed by the venom gland.

Its subcellular location is the secreted. The chain is Toxin-like structure LSTX-R1 from Lycosa singoriensis (Wolf spider).